The sequence spans 655 residues: Epithelial sodium channel subunit alpha (655 aa).

The Cytoplasmic portion of the chain corresponds to 1 to 55 (MTDKEEEAEGGKKKEPMIGFYDSYQELFEFFCNNTTIHGTIRMVCSKHNNMKTVS). A helical transmembrane segment spans residues 56-76 (WTILFITTFGVMYWQFGLLLG). Over 77–531 (QYYSYPVSIT…SQWSLWFGSS (455 aa)) the chain is Extracellular. 10 disulfides stabilise this stretch: Cys-102–Cys-275, Cys-199–Cys-206, Cys-252–Cys-259, Cys-364–Cys-448, Cys-385–Cys-425, Cys-385–Cys-444, Cys-389–Cys-440, Cys-398–Cys-425, Cys-398–Cys-448, and Cys-400–Cys-414. Residues 532–552 (VLSVVEMGELVFDLIAVGVIV) form a helical membrane-spanning segment. At 553-655 (LRRRRREKCQ…QEASEGPTVL (103 aa)) the chain is on the cytoplasmic side. Residues 561 to 587 (CQASSDGEGTSDSTAGTHRGQENASRS) are disordered. Positions 562 to 586 (QASSDGEGTSDSTAGTHRGQENASR) are enriched in polar residues.

The protein belongs to the amiloride-sensitive sodium channel (TC 1.A.6) family. SCNN1A subfamily. Heterotrimer; containing an alpha/SCNN1A, a beta/SCNN1B and a gamma/SCNN1G subunit. In terms of tissue distribution, strongly expressed in gill, kidney and rectum (at protein level). More weakly expressed in muscle, brain, heart, liver and intestine.

It is found in the apical cell membrane. It localises to the cell projection. The protein localises to the cilium. The protein resides in the cytoplasmic granule. Its subcellular location is the cytoplasm. It is found in the cytoplasmic vesicle. It localises to the secretory vesicle. The protein localises to the acrosome. The protein resides in the flagellum. It catalyses the reaction Na(+)(in) = Na(+)(out). Originally identified and characterized by its inhibition by the diuretic drug amiloride. In terms of biological role, this is one of the three pore-forming subunits of the heterotrimeric epithelial sodium channel (ENaC), a critical regulator of sodium balance and fluid homeostasis. ENaC operates in epithelial tissues, where it mediates the electrodiffusion of sodium ions from extracellular fluid through the apical membrane of cells, with water following osmotically. In Neoceratodus forsteri (Australian lungfish), this protein is Epithelial sodium channel subunit alpha (scnn1a).